A 535-amino-acid polypeptide reads, in one-letter code: Isoleucine N-monooxygenase 1 (535 aa).

Topologically, residues 1–8 (MGLMPDFL) are cytoplasmic. The helical; Signal-anchor for type II membrane protein transmembrane segment at 9-29 (SLCHEFPWTFLLVVIFSFMIF) threads the bilayer. At 30–535 (KVTKTHLVNK…AAELYRTNEI (506 aa)) the chain is on the lumenal side. Asn-38, Asn-232, and Asn-404 each carry an N-linked (GlcNAc...) asparagine glycan. A heme-binding site is contributed by Cys-470.

The protein belongs to the cytochrome P450 family. It depends on heme as a cofactor. In terms of tissue distribution, exclusively expressed in aerial parts. Highest expression in the apical leaves. Also detected in the second leaf from the top and in the stem. Not expressed in older leaves or roots.

It is found in the microsome membrane. It carries out the reaction L-isoleucine + 2 reduced [NADPH--hemoprotein reductase] + 2 O2 = (1E,2S)-2-methylbutanal oxime + 2 oxidized [NADPH--hemoprotein reductase] + CO2 + 3 H2O + 2 H(+). It catalyses the reaction L-isoleucine + reduced [NADPH--hemoprotein reductase] + O2 = N-hydroxy-L-isoleucine + oxidized [NADPH--hemoprotein reductase] + H2O + 2 H(+). The enzyme catalyses N-hydroxy-L-isoleucine + reduced [NADPH--hemoprotein reductase] + O2 = N,N-dihydroxy-L-isoleucine + oxidized [NADPH--hemoprotein reductase] + H2O + H(+). The catalysed reaction is L-valine + 2 reduced [NADPH--hemoprotein reductase] + 2 O2 = (E)-2-methylpropanal oxime + 2 oxidized [NADPH--hemoprotein reductase] + CO2 + 3 H2O + 2 H(+). It carries out the reaction L-valine + reduced [NADPH--hemoprotein reductase] + O2 = N-hydroxy-L-valine + oxidized [NADPH--hemoprotein reductase] + H2O + 2 H(+). It catalyses the reaction N-hydroxy-L-valine + reduced [NADPH--hemoprotein reductase] + O2 = N,N-dihydroxy-L-valine + oxidized [NADPH--hemoprotein reductase] + H2O + H(+). The protein operates within secondary metabolite biosynthesis. Its function is as follows. Involved in the biosynthesis of the cyanogenic glucosides linamarin and lotaustralin and of the nitirle glucosides rhodiocyanoside A and D. Can use L-isoleucine &gt; L-valine as substrate, but not L-leucine, L-phenylalanine or L-tyrosine. Catalyzes multi-step reactions starting with two successive N-hydroxylations using L-isoleucine and, to a lower extent, L-valine as substrates leading to the formation of N,N-dihydroxy-L-valine and N,N-dihydroxy-L-isoleucine, respectively; following spontaneous reactions lead to the production of (E)-2-methylpropanal oxime and (1E,2S)-2-methylbutanal oxime, respectively. The protein is Isoleucine N-monooxygenase 1 of Lotus japonicus (Lotus corniculatus var. japonicus).